The sequence spans 823 residues: DNA mismatch repair protein MutS (823 aa).

Residue 605–612 (GPNMSGKS) participates in ATP binding.

It belongs to the DNA mismatch repair MutS family.

In terms of biological role, this protein is involved in the repair of mismatches in DNA. It is possible that it carries out the mismatch recognition step. This protein has a weak ATPase activity. In Fervidobacterium nodosum (strain ATCC 35602 / DSM 5306 / Rt17-B1), this protein is DNA mismatch repair protein MutS.